A 154-amino-acid chain; its full sequence is Crossover junction endodeoxyribonuclease RuvC (154 aa).

Active-site residues include aspartate 7, glutamate 67, and aspartate 139. Mg(2+)-binding residues include aspartate 7, glutamate 67, and aspartate 139.

This sequence belongs to the RuvC family. In terms of assembly, homodimer which binds Holliday junction (HJ) DNA. The HJ becomes 2-fold symmetrical on binding to RuvC with unstacked arms; it has a different conformation from HJ DNA in complex with RuvA. In the full resolvosome a probable DNA-RuvA(4)-RuvB(12)-RuvC(2) complex forms which resolves the HJ. Mg(2+) is required as a cofactor.

The protein resides in the cytoplasm. The enzyme catalyses Endonucleolytic cleavage at a junction such as a reciprocal single-stranded crossover between two homologous DNA duplexes (Holliday junction).. Functionally, the RuvA-RuvB-RuvC complex processes Holliday junction (HJ) DNA during genetic recombination and DNA repair. Endonuclease that resolves HJ intermediates. Cleaves cruciform DNA by making single-stranded nicks across the HJ at symmetrical positions within the homologous arms, yielding a 5'-phosphate and a 3'-hydroxyl group; requires a central core of homology in the junction. The consensus cleavage sequence is 5'-(A/T)TT(C/G)-3'. Cleavage occurs on the 3'-side of the TT dinucleotide at the point of strand exchange. HJ branch migration catalyzed by RuvA-RuvB allows RuvC to scan DNA until it finds its consensus sequence, where it cleaves and resolves the cruciform DNA. The chain is Crossover junction endodeoxyribonuclease RuvC from Prochlorococcus marinus (strain NATL1A).